The chain runs to 327 residues: GMP reductase (327 aa).

The active-site Thioimidate intermediate is the Cys176. Ile205–Val228 is an NADP(+) binding site.

It belongs to the IMPDH/GMPR family. GuaC type 2 subfamily.

The enzyme catalyses IMP + NH4(+) + NADP(+) = GMP + NADPH + 2 H(+). Catalyzes the irreversible NADPH-dependent deamination of GMP to IMP. It functions in the conversion of nucleobase, nucleoside and nucleotide derivatives of G to A nucleotides, and in maintaining the intracellular balance of A and G nucleotides. This Streptococcus pyogenes serotype M49 (strain NZ131) protein is GMP reductase.